The following is a 201-amino-acid chain: MQTSPLLESLMEALRCLPGVGPKSAQRMAFQLLQRNRSGGMRLAQALTRAMSEIGHCSDCRTFTEQDVCAICSNPRRQQNGQICVVESPADIHAIEQTGQFAGRYFVLMGHLSPLDGIGPDDIGLGRLEERLQVESISEVILATNPTVEGDATANYIAELCAQHGVMASRIAHGVPVGGELEMVDGTTLSHSLAGRQPFRF.

Residues 57–72 (CSDCRTFTEQDVCAIC) form a C4-type zinc finger. Positions 81-176 (GQICVVESPA…MASRIAHGVP (96 aa)) constitute a Toprim domain.

This sequence belongs to the RecR family.

Its function is as follows. May play a role in DNA repair. It seems to be involved in an RecBC-independent recombinational process of DNA repair. It may act with RecF and RecO. This is Recombination protein RecR from Pectobacterium carotovorum subsp. carotovorum (strain PC1).